A 253-amino-acid chain; its full sequence is 3-deoxy-manno-octulosonate cytidylyltransferase (253 aa).

It belongs to the KdsB family.

The protein localises to the cytoplasm. It catalyses the reaction 3-deoxy-alpha-D-manno-oct-2-ulosonate + CTP = CMP-3-deoxy-beta-D-manno-octulosonate + diphosphate. Its pathway is nucleotide-sugar biosynthesis; CMP-3-deoxy-D-manno-octulosonate biosynthesis; CMP-3-deoxy-D-manno-octulosonate from 3-deoxy-D-manno-octulosonate and CTP: step 1/1. It participates in bacterial outer membrane biogenesis; lipopolysaccharide biosynthesis. Activates KDO (a required 8-carbon sugar) for incorporation into bacterial lipopolysaccharide in Gram-negative bacteria. This chain is 3-deoxy-manno-octulosonate cytidylyltransferase, found in Acinetobacter baumannii (strain AYE).